The primary structure comprises 234 residues: MSLIVKICGLSEPETLEAALEAGADMVGLVFFPPSPRNVDLARAAELAARARGRAEIAALTVDADARLLDAIAREVRPDWLQLHGNEPPEAVAALRETYDARVMKAVALATRADLAKVAPYVSVADRILFDARAPKDATRPGGLGVPFDWRILEGADPGLPFVLSGGLHADNLSEALALVRPHGVDVSSGVERTIGVKDADMIRAFIRAARAASSSPRPVDGESPAFQRSEKAG.

The disordered stretch occupies residues 211 to 234 (RAASSSPRPVDGESPAFQRSEKAG).

Belongs to the TrpF family.

It carries out the reaction N-(5-phospho-beta-D-ribosyl)anthranilate = 1-(2-carboxyphenylamino)-1-deoxy-D-ribulose 5-phosphate. The protein operates within amino-acid biosynthesis; L-tryptophan biosynthesis; L-tryptophan from chorismate: step 3/5. The protein is N-(5'-phosphoribosyl)anthranilate isomerase of Afipia carboxidovorans (strain ATCC 49405 / DSM 1227 / KCTC 32145 / OM5) (Oligotropha carboxidovorans).